Here is a 333-residue protein sequence, read N- to C-terminus: E3 ubiquitin-protein ligase MIR1 (333 aa).

An RING-CH-type zinc finger spans residues 1-60 (MEDEDVPVCWICNEELGNERFRACGCTGELENVHRSCLSTWLTISRNTACQICGVVYNTR). The Cytoplasmic portion of the chain corresponds to 1–82 (MEDEDVPVCW…PRLTYQEGLE (82 aa)). Cysteine 9, cysteine 12, cysteine 24, cysteine 26, histidine 34, cysteine 37, cysteine 50, and cysteine 53 together coordinate Zn(2+). A helical membrane pass occupies residues 83-103 (LIVFIFIMTLGAAGLAAATWV). At 104-121 (WLYIVGGHDPEIDHVAAA) the chain is on the extracellular side. A helical membrane pass occupies residues 122 to 142 (AYYVFFVFYQLFVVFGLGAFF). Topologically, residues 143–333 (HMMRHVGRAY…SAVSSALMFH (191 aa)) are cytoplasmic. The interval 187–257 (GDNQDEEGPA…GRDDNVEPTA (71 aa)) is disordered. The segment covering 195–221 (PAGAAPGDQNGPAGAAPGDQDGPADGA) has biased composition (low complexity). Over residues 235-252 (AGYKEAGEPTHNDGRDDN) the composition is skewed to basic and acidic residues.

As to quaternary structure, binds human MHC-I and CD1D.

It is found in the host cell membrane. It localises to the host endoplasmic reticulum. It catalyses the reaction [E2 ubiquitin-conjugating enzyme]-S-ubiquitinyl-L-cysteine + [acceptor protein]-L-cysteine = [E2 ubiquitin-conjugating enzyme]-L-cysteine + [acceptor protein]-S-ubiquitinyl-L-cysteine.. The protein operates within protein modification; protein ubiquitination. In terms of biological role, membrane-bound E3 ubiquitin ligase expressed during late stages of lytic replication to mediate polyubiquitination of various host membrane proteins related to the immune response. Promotes ubiquitination and subsequent degradation of host MHC-I and CD1D molecules, DC-SIGN and DC-SIGNR, presumably to prevent lysis of infected cells by cytotoxic T-lymphocytes. Binds target molecules through transmembrane interaction. E3 ubiquitin-protein ligases accept ubiquitin from specific E2 ubiquitin-conjugating enzymes, and then transfer it to target protein. The result of this ubiquitination is the enhancement of the endocytosis of the target chain and the delivery to the lysosome, where it is proteolytically destroyed. Induces ubiquitination not only on lysines, but also on cysteine residues. This Human herpesvirus 8 type P (isolate GK18) (HHV-8) protein is E3 ubiquitin-protein ligase MIR1 (K3).